We begin with the raw amino-acid sequence, 343 residues long: Peptide methionine sulfoxide reductase msrA/msrB (343 aa).

Positions 21 to 174 (KVIYLAGGCF…PNGYCHIDLK (154 aa)) are peptide methionine sulfoxide reductase A. Cys29 functions as the Cysteine sulfenic acid (-SOH) intermediate in the catalytic mechanism. A MsrB domain is found at 191–314 (DEVLKKKLTQ…NSASLRFIPL (124 aa)). The Nucleophile role is filled by Cys303.

In the N-terminal section; belongs to the MsrA Met sulfoxide reductase family. This sequence in the C-terminal section; belongs to the MsrB Met sulfoxide reductase family.

The catalysed reaction is L-methionyl-[protein] + [thioredoxin]-disulfide + H2O = L-methionyl-(S)-S-oxide-[protein] + [thioredoxin]-dithiol. It carries out the reaction [thioredoxin]-disulfide + L-methionine + H2O = L-methionine (S)-S-oxide + [thioredoxin]-dithiol. The enzyme catalyses L-methionyl-[protein] + [thioredoxin]-disulfide + H2O = L-methionyl-(R)-S-oxide-[protein] + [thioredoxin]-dithiol. Its function is as follows. Has an important function as a repair enzyme for proteins that have been inactivated by oxidation. Catalyzes the reversible oxidation-reduction of methionine sulfoxide in proteins to methionine. The polypeptide is Peptide methionine sulfoxide reductase msrA/msrB (Enterococcus faecalis (Streptococcus faecalis)).